Reading from the N-terminus, the 115-residue chain is uncharacterized protein (115 aa).

A helical membrane pass occupies residues 10-28 (ALFIGVFLIVFLGCIGSTL).

It is found in the host membrane. This is an uncharacterized protein from Haemophilus influenzae (Bacteriophage HP1).